Here is a 585-residue protein sequence, read N- to C-terminus: Arginine--tRNA ligase (585 aa).

Positions alanine 131–histidine 141 match the 'HIGH' region motif.

It belongs to the class-I aminoacyl-tRNA synthetase family. In terms of assembly, monomer.

The protein resides in the cytoplasm. The catalysed reaction is tRNA(Arg) + L-arginine + ATP = L-arginyl-tRNA(Arg) + AMP + diphosphate. In Allorhizobium ampelinum (strain ATCC BAA-846 / DSM 112012 / S4) (Agrobacterium vitis (strain S4)), this protein is Arginine--tRNA ligase.